The sequence spans 529 residues: Peptide chain release factor 3 (529 aa).

Residues 11–280 (AKRRTFAIIS…GLVAWAPAPM (270 aa)) enclose the tr-type G domain. Residues 20–27 (SHPDAGKT), 88–92 (DTPGH), and 142–145 (NKLD) each bind GTP.

It belongs to the TRAFAC class translation factor GTPase superfamily. Classic translation factor GTPase family. PrfC subfamily.

The protein resides in the cytoplasm. In terms of biological role, increases the formation of ribosomal termination complexes and stimulates activities of RF-1 and RF-2. It binds guanine nucleotides and has strong preference for UGA stop codons. It may interact directly with the ribosome. The stimulation of RF-1 and RF-2 is significantly reduced by GTP and GDP, but not by GMP. This is Peptide chain release factor 3 from Salmonella agona (strain SL483).